The chain runs to 201 residues: Protease (201 aa).

Active-site residues include His-55, Asp-72, and Cys-122.

This sequence belongs to the peptidase C5 family. In terms of assembly, interacts with protease cofactor pVI-C; this interaction is necessary for protease activation.

The protein resides in the virion. It localises to the host nucleus. It catalyses the reaction Cleaves proteins of the adenovirus and its host cell at two consensus sites: -Yaa-Xaa-Gly-Gly-|-Xaa- and -Yaa-Xaa-Gly-Xaa-|-Gly- (in which Yaa is Met, Ile or Leu, and Xaa is any amino acid).. With respect to regulation, requires DNA and protease cofactor for maximal activation. Inside nascent virions, becomes partially activated by binding to the viral DNA, allowing it to cleave the cofactor that binds to the protease and fully activates it. Actin, like the viral protease cofactor, seems to act as a cofactor in the cleavage of cytokeratin 18 and of actin itself. Cleaves viral precursor proteins (pTP, pIIIa, pVI, pVII, pVIII, and pX) inside newly assembled particles giving rise to mature virions. Protease complexed to its cofactor slides along the viral DNA to specifically locate and cleave the viral precursors. Mature virions have a weakened organization compared to the unmature virions, thereby facilitating subsequent uncoating. Without maturation, the particle lacks infectivity and is unable to uncoat. Late in adenovirus infection, in the cytoplasm, may participate in the cytoskeleton destruction. Cleaves host cell cytoskeletal keratins K7 and K18. The protein is Protease of Ovis aries (Sheep).